The following is a 406-amino-acid chain: Probable G-protein coupled receptor tkr-1 (406 aa).

Residues 1-47 (MNQEFLIQLGERACKNAENLTLPAELEGIFFCAPSSRESLATQVFVA) are Extracellular-facing. Residues 48–68 (IAFVLLMATAIIGNSVVMWII) form a helical membrane-spanning segment. The Cytoplasmic portion of the chain corresponds to 69–76 (YQHKVMHY). Residues 77 to 97 (GFNYFLFNMAFADLLIALFNV) form a helical membrane-spanning segment. Residues 98-115 (GTSWTYNLYYDWWYGDLC) are Extracellular-facing. The chain crosses the membrane as a helical span at residues 116–136 (TLTSFFGIAPTTVSVCSMMAL). Topologically, residues 137-158 (SWDRCQAVVNPLQKRPLSRKRS) are cytoplasmic. A helical membrane pass occupies residues 159 to 179 (VIAILIIWVVSTVTALPFAIA). Residues 180–204 (ASVNSLYTYDVVTSTVSKAHVCSAP) lie on the Extracellular side of the membrane. Residues 205–225 (VNTFFEKVLFGIQYALPIIIL) form a helical membrane-spanning segment. Over 226–261 (GSTFTRIAVAFRATNEATDSSLKNNHTRAKSKAVKM) the chain is Cytoplasmic. The helical transmembrane segment at 262–282 (LFLMVVAFVVCWLPYHIYHAF) threads the bilayer. At 283-297 (ALEEFFDAARGKYAY) the chain is on the extracellular side. Residues 298–318 (LLIYWIAMSSCAYNPIIYCFA) traverse the membrane as a helical segment. At 319-406 (NERFRIGFRY…KVHLLSCHER (88 aa)) the chain is on the cytoplasmic side.

This sequence belongs to the G-protein coupled receptor 1 family.

Its subcellular location is the cell membrane. Functionally, not known. Putative receptor. This is Probable G-protein coupled receptor tkr-1 (tkr-1) from Caenorhabditis elegans.